The following is a 66-amino-acid chain: Large ribosomal subunit protein bL35 (66 aa).

Residues 1–16 are compositionally biased toward basic residues; the sequence is MPKQKTHRASAKRFKR. The interval 1–20 is disordered; that stretch reads MPKQKTHRASAKRFKRTGSG.

This sequence belongs to the bacterial ribosomal protein bL35 family.

The polypeptide is Large ribosomal subunit protein bL35 (Streptococcus uberis (strain ATCC BAA-854 / 0140J)).